A 911-amino-acid chain; its full sequence is SH3 and PX domain-containing protein 2B (911 aa).

Residues 5–129 form the PX domain; the sequence is RSIVEVKVLD…QFFETRPEDL (125 aa). Y25 carries the phosphotyrosine modification. SH3 domains follow at residues 152 to 211 and 221 to 280; these read MVLE…GQDG and EEEE…KNSG. Positions 275–366 are disordered; sequence LKKNSGEPLP…GLNLPKPPIP (92 aa). S279 and S291 each carry phosphoserine. The span at 282–292 shows a compositional bias: pro residues; the sequence is PLPPKPGPGSP. Basic and acidic residues predominate over residues 311-337; the sequence is GREKELLSSQRDGRFEGRPVPDGDAKQ. Basic residues predominate over residues 338–347; sequence RSPKMRQRPP. An SH3 3 domain is found at 368-427; it reads QVEEEYYTIAEFQTTIPDGISFQAGLKVEVIEKNLSGWWYIQIEDKEGWAPATFIDKYKK. Residues 458–834 form a disordered region; the sequence is NTGSEATGPS…GPWGTGKIGE (377 aa). 5 stretches are compositionally biased toward basic and acidic residues: residues 486-499, 517-548, 571-586, 598-609, and 618-628; these read KDWK…RKAS, EEKP…RTEQ, PARD…DKSR, CGHKVLAKEVKK, and SKTDLPEEKPD. S499 and S528 each carry phosphoserine. Composition is skewed to pro residues over residues 643–653 and 756–766; these read RPKPAPSPKTE and VVPPRRPPPPK. Over residues 822–831 the composition is skewed to gly residues; sequence GSLGPWGTGK. The residue at position 843 (S843) is a Phosphoserine. The SH3 4 domain occupies 850-911; the sequence is LKDSLYVAVA…IPSNYLRKKP (62 aa).

The protein belongs to the SH3PXD2 family. In terms of assembly, interacts with ADAM15. Interacts with NOXO1. Interacts (via SH3 domains) with NOXA1; the interaction is direct. Interacts with FASLG. Phosphorylated in SRC-transformed cells. Expressed in fibroblasts.

Its subcellular location is the cytoplasm. The protein resides in the cell projection. It localises to the podosome. Its function is as follows. Adapter protein involved in invadopodia and podosome formation and extracellular matrix degradation. Binds matrix metalloproteinases (ADAMs), NADPH oxidases (NOXs) and phosphoinositides. Acts as an organizer protein that allows NOX1- or NOX3-dependent reactive oxygen species (ROS) generation and ROS localization. Plays a role in mitotic clonal expansion during the immediate early stage of adipocyte differentiation. This is SH3 and PX domain-containing protein 2B (SH3PXD2B) from Homo sapiens (Human).